A 340-amino-acid polypeptide reads, in one-letter code: 4-dimethylallyltryptophan N-methyltransferase ifgB (340 aa).

This sequence belongs to the methyltransferase superfamily. Homodimer.

The catalysed reaction is 4-(3-methylbut-2-enyl)-L-tryptophan + S-adenosyl-L-methionine = 4-(3-methylbut-2-enyl)-L-abrine + S-adenosyl-L-homocysteine + H(+). Its pathway is alkaloid biosynthesis; ergot alkaloid biosynthesis. Functionally, 4-dimethylallyltryptophan N-methyltransferase; part of the gene cluster that mediates the biosynthesis of isofumigaclavines, fungal ergot alkaloids. The tryptophan dimethylallyltransferase ifgA catalyzes the first step of ergot alkaloid biosynthesis by condensing dimethylallyl diphosphate (DMAP) and tryptophan to form 4-dimethylallyl-L-tryptophan. The second step is catalyzed by the methyltransferase ifgB that methylates 4-dimethylallyl-L-tryptophan in the presence of S-adenosyl-L-methionine, resulting in the formation of N-methyl-dimethylallyl-L-tryptophan. The catalase ifgD and the FAD-dependent oxidoreductase ifgC then transform N-methyl-dimethylallyl-L-tryptophan to chanoclavine-I which is further oxidized by ifgE in the presence of NAD(+), resulting in the formation of chanoclavine-I aldehyde. The chanoclavine-I aldehyde reductases ifgG and/or fgaOx3 reduce chanoclavine-I aldehyde to dihydrochanoclavine-I aldehyde that spontaneously dehydrates to form 6,8-dimethyl-6,7-didehydroergoline. The festuclavine dehydrogenases ifgF1 and/or ifgF2 then catalyze the reduction of 6,8-dimethyl-6,7-didehydroergoline to form festuclavine. Hydrolysis of festuclavine by a yet undetermined cytochrome P450 monooxygenase (called ifgH) then leads to the formation of isofumigaclavine B which is in turn acetylated by ifgI to isofumigaclavine A. Penicillium roqueforti has interestingly at least two sets of genes for the consumption of chanoclavine-I aldehyde on three different loci, the OYEs ifgG/fgaOx3 and the festuclavine synthase homologs ifgF1/ifgF2. The reason for the duplication of these genes is unclear, probably to ensure the conversion of chanoclavine-I aldehyde by differential gene expression under various environmental conditions. The chain is 4-dimethylallyltryptophan N-methyltransferase ifgB from Penicillium roqueforti (strain FM164).